The chain runs to 366 residues: Tyrosyl-DNA phosphodiesterase 2 (366 aa).

The residue at position 1 (methionine 1) is an N-acetylmethionine. Over residues 1–22 (MASGSSSDAAESAEPAAAPAAA) the composition is skewed to low complexity. A disordered region spans residues 1-30 (MASGSSSDAAESAEPAAAPAAAETEEDQVK). Lysine 30 participates in a covalent cross-link: Glycyl lysine isopeptide (Lys-Gly) (interchain with G-Cter in SUMO2). Position 95 is a phosphothreonine; by ACVR1B (threonine 95). Residues 126-130 (NIDGL) form an interaction with 5' end of substrate DNA region. Aspartate 128 and glutamate 158 together coordinate Mg(2+). Residues 232 to 237 (HLESTR) are interaction with 5' end of substrate DNA. The active-site Proton donor/acceptor is aspartate 268. The tract at residues 270–272 (NLR) is interaction with 5' end of substrate DNA.

The protein belongs to the CCR4/nocturin family. Interacts with TRAF2, TRAF3, TRAF5, TRAF6, TNFRSF8/CD30, TNFRSF5/CD40, TNFRSF1B/TNF-R75, ETS1, ETS2, FLI1, SMAD3 and ACVR1B/ALK4. It depends on Mg(2+) as a cofactor. The cofactor is Mn(2+). Ubiquitinated by TRAF6.

The protein localises to the nucleus. The protein resides in the PML body. It is found in the nucleolus. It localises to the cytoplasm. In terms of biological role, DNA repair enzyme that can remove a variety of covalent adducts from DNA through hydrolysis of a 5'-phosphodiester bond, giving rise to DNA with a free 5' phosphate. Catalyzes the hydrolysis of dead-end complexes between DNA and the topoisomerase 2 (TOP2) active site tyrosine residue. The 5'-tyrosyl DNA phosphodiesterase activity can enable the repair of TOP2-induced DNA double-strand breaks/DSBs without the need for nuclease activity, creating a 'clean' DSB with 5'-phosphate termini that are ready for ligation. Thereby, protects the transcription of many genes involved in neurological development and maintenance from the abortive activity of TOP2. Hydrolyzes 5'-phosphoglycolates on protruding 5' ends on DSBs due to DNA damage by radiation and free radicals. Has preference for single-stranded DNA or duplex DNA with a 4 base pair overhang as substrate. Also has 3'-tyrosyl DNA phosphodiesterase activity, but less efficiently and much slower than TDP1. Constitutes the major if not only 5'-tyrosyl-DNA phosphodiesterase in cells. Also acts as an adapter by participating in the specific activation of MAP3K7/TAK1 in response to TGF-beta: associates with components of the TGF-beta receptor-TRAF6-TAK1 signaling module and promotes their ubiquitination dependent complex formation. Involved in non-canonical TGF-beta induced signaling routes. May also act as a negative regulator of ETS1 and may inhibit NF-kappa-B activation. Acts as a regulator of ribosome biogenesis following stress. This Rattus norvegicus (Rat) protein is Tyrosyl-DNA phosphodiesterase 2 (Tdp2).